A 194-amino-acid chain; its full sequence is Thymidylate kinase (194 aa).

7-14 (GVDGVGKS) contacts ATP.

This sequence belongs to the thymidylate kinase family.

It catalyses the reaction dTMP + ATP = dTDP + ADP. Functionally, phosphorylation of dTMP to form dTDP in both de novo and salvage pathways of dTTP synthesis. The polypeptide is Thymidylate kinase (Campylobacter curvus (strain 525.92)).